Consider the following 250-residue polypeptide: Leucyl/phenylalanyl-tRNA--protein transferase (250 aa).

This sequence belongs to the L/F-transferase family.

It is found in the cytoplasm. It carries out the reaction N-terminal L-lysyl-[protein] + L-leucyl-tRNA(Leu) = N-terminal L-leucyl-L-lysyl-[protein] + tRNA(Leu) + H(+). The enzyme catalyses N-terminal L-arginyl-[protein] + L-leucyl-tRNA(Leu) = N-terminal L-leucyl-L-arginyl-[protein] + tRNA(Leu) + H(+). The catalysed reaction is L-phenylalanyl-tRNA(Phe) + an N-terminal L-alpha-aminoacyl-[protein] = an N-terminal L-phenylalanyl-L-alpha-aminoacyl-[protein] + tRNA(Phe). In terms of biological role, functions in the N-end rule pathway of protein degradation where it conjugates Leu, Phe and, less efficiently, Met from aminoacyl-tRNAs to the N-termini of proteins containing an N-terminal arginine or lysine. In Xanthomonas oryzae pv. oryzae (strain MAFF 311018), this protein is Leucyl/phenylalanyl-tRNA--protein transferase.